The sequence spans 137 residues: Nucleoside diphosphate kinase (137 aa).

6 residues coordinate ATP: Lys-10, Phe-59, Arg-87, Thr-93, Arg-104, and Asn-114. His-117 functions as the Pros-phosphohistidine intermediate in the catalytic mechanism.

It belongs to the NDK family. Homotetramer. Mg(2+) serves as cofactor.

The protein localises to the cytoplasm. It carries out the reaction a 2'-deoxyribonucleoside 5'-diphosphate + ATP = a 2'-deoxyribonucleoside 5'-triphosphate + ADP. It catalyses the reaction a ribonucleoside 5'-diphosphate + ATP = a ribonucleoside 5'-triphosphate + ADP. Functionally, major role in the synthesis of nucleoside triphosphates other than ATP. The ATP gamma phosphate is transferred to the NDP beta phosphate via a ping-pong mechanism, using a phosphorylated active-site intermediate. This Streptomyces griseus subsp. griseus (strain JCM 4626 / CBS 651.72 / NBRC 13350 / KCC S-0626 / ISP 5235) protein is Nucleoside diphosphate kinase.